A 776-amino-acid polypeptide reads, in one-letter code: DNA topoisomerase 1 (776 aa).

A Toprim domain is found at 1–111 (MKLVIVESPA…VKSDDFFKRV (111 aa)). 2 residues coordinate Mg(2+): glutamate 7 and aspartate 80. Residues 132-568 (DTNLVNAQQA…FWSGFNHNIE (437 aa)) form the Topo IA-type catalytic domain. An interaction with DNA region spans residues 166–171 (SAGRVQ). The active-site O-(5'-phospho-DNA)-tyrosine intermediate is tyrosine 304. A C4-type zinc finger spans residues 600–627 (CPSCNTGELSLKLGKFGAFLACSNYPEC).

The protein belongs to the type IA topoisomerase family. As to quaternary structure, monomer. Mg(2+) is required as a cofactor.

It carries out the reaction ATP-independent breakage of single-stranded DNA, followed by passage and rejoining.. Releases the supercoiling and torsional tension of DNA, which is introduced during the DNA replication and transcription, by transiently cleaving and rejoining one strand of the DNA duplex. Introduces a single-strand break via transesterification at a target site in duplex DNA. The scissile phosphodiester is attacked by the catalytic tyrosine of the enzyme, resulting in the formation of a DNA-(5'-phosphotyrosyl)-enzyme intermediate and the expulsion of a 3'-OH DNA strand. The free DNA strand then undergoes passage around the unbroken strand, thus removing DNA supercoils. Finally, in the religation step, the DNA 3'-OH attacks the covalent intermediate to expel the active-site tyrosine and restore the DNA phosphodiester backbone. The polypeptide is DNA topoisomerase 1 (Rickettsia conorii (strain ATCC VR-613 / Malish 7)).